We begin with the raw amino-acid sequence, 99 residues long: Signal recognition particle 19 kDa protein (99 aa).

It belongs to the SRP19 family. As to quaternary structure, part of the signal recognition particle protein translocation system, which is composed of SRP and FtsY. Archaeal SRP consists of a 7S RNA molecule of 300 nucleotides and two protein subunits: SRP54 and SRP19.

It is found in the cytoplasm. Involved in targeting and insertion of nascent membrane proteins into the cytoplasmic membrane. Binds directly to 7S RNA and mediates binding of the 54 kDa subunit of the SRP. This Pyrococcus horikoshii (strain ATCC 700860 / DSM 12428 / JCM 9974 / NBRC 100139 / OT-3) protein is Signal recognition particle 19 kDa protein.